We begin with the raw amino-acid sequence, 85 residues long: Large ribosomal subunit protein bL27 (85 aa).

Residues 1 to 26 (MAHKKGVGSSRNGRDSNPKMLGVKRF) form a disordered region.

Belongs to the bacterial ribosomal protein bL27 family.

The chain is Large ribosomal subunit protein bL27 from Roseiflexus sp. (strain RS-1).